A 73-amino-acid chain; its full sequence is Gas vesicle protein A (73 aa).

Belongs to the gas vesicle GvpA family. As to quaternary structure, the gas vesicle shell is 2 nm thick and consists of a single layer of this protein. It forms helical ribs nearly perpendicular to the long axis of the vesicle.

It is found in the gas vesicle shell. Its function is as follows. Gas vesicles are hollow, gas filled proteinaceous nanostructures found in some microorganisms. During planktonic growth they allow positioning of the organism at a favorable depth for light or nutrient acquisition. GvpA forms the protein shell. This chain is Gas vesicle protein A, found in Nostoc punctiforme (strain ATCC 29133 / PCC 73102).